The primary structure comprises 115 residues: U17-barytoxin-Tl1b (115 aa).

An N-terminal signal peptide occupies residues 1–20; that stretch reads MKTIIVFLSLLVLATKFGDA. Positions 21-74 are excised as a propeptide; it reads KEGVNQKQKKEVTQNEFREEYLNEMAAMSLVQQLEAIERALFENEAGRNSRQKR. 3 cysteine pairs are disulfide-bonded: cysteine 75/cysteine 89, cysteine 82/cysteine 94, and cysteine 88/cysteine 109.

It belongs to the neurotoxin 14 (magi-1) family. 03 (ICK-30-40) subfamily. As to expression, expressed by the venom gland.

Its subcellular location is the secreted. In terms of biological role, ion channel inhibitor. This Trittame loki (Brush-footed trapdoor spider) protein is U17-barytoxin-Tl1b.